Here is a 151-residue protein sequence, read N- to C-terminus: UPF0178 protein CJA_1978 (151 aa).

The protein belongs to the UPF0178 family.

This Cellvibrio japonicus (strain Ueda107) (Pseudomonas fluorescens subsp. cellulosa) protein is UPF0178 protein CJA_1978.